A 527-amino-acid chain; its full sequence is Abrin-b (527 aa).

Residue Q1 is modified to Pyrrolidone carboxylic acid. The N-linked (GlcNAc...) asparagine glycan is linked to N110. E163 is a catalytic residue. 3 cysteine pairs are disulfide-bonded: C246/C268, C285/C304, and C328/C345. One can recognise a Ricin B-type lectin 1 domain in the interval 272-399 (YEPTVRIGGR…YLMRQGWRTG (128 aa)). Residues 282–324 (NGMCVDVYDDGYHNGNRIIAWKCKDRLEENQLWTLKSDKTIRS) form a 1-alpha repeat. The 1-beta repeat unit spans residues 325–365 (NGKCLTTEGYAPGNYVMIYDCTSAVAEATYWEIWDNGTIIN). N-linked (GlcNAc...) asparagine glycans are attached at residues N360 and N400. A 1-gamma repeat occupies 368 to 400 (SALVLSAESSSMGGTLTVQTNEYLMRQGWRTGN). One can recognise a Ricin B-type lectin 2 domain in the interval 402–526 (TSPFVTSISG…GKPNQIWLTL (125 aa)). One copy of the 2-alpha repeat lies at 413–448 (SDLCMQAQGSNVWLAYCDNNKKEQQWALYTDGSIRS). 2 disulfides stabilise this stretch: C416–C429 and C455–C472. A 2-beta repeat occupies 452 to 491 (TNNCLTSKDHKQGSPIVLMACSNGWASQRWLFRNDGSIYN). The stretch at 494 to 527 (DDMVMDVKRSDPSLKEIILHPYHGKPNQIWLTLF) is one 2-gamma repeat.

It in the N-terminal section; belongs to the ribosome-inactivating protein family. Type 2 RIP subfamily. As to quaternary structure, disulfide-linked dimer of A and B chains.

The enzyme catalyses Endohydrolysis of the N-glycosidic bond at one specific adenosine on the 28S rRNA.. The A chain is responsible for inhibiting protein synthesis through the catalytic inactivation of 60S ribosomal subunits by removing adenine from position 4,324 of 28S rRNA. Abrin-a is more toxic than ricin. In terms of biological role, the B chain is a galactose-specific lectin that facilitates the binding of abrin to the cell membrane that precedes endocytosis. The polypeptide is Abrin-b (Abrus precatorius (Indian licorice)).